A 198-amino-acid polypeptide reads, in one-letter code: MAEKENTKRNRREEILQALAQMLESSDGSQRITTAKLAANVGVSEAALYRHFPSKTRMFDSLIEFIEDSLISRINLILQDEKETLNRLRLILLLLLGFAERNPGLTRIMTGHALMFEQDRLQGRINQLYERIEVQLRQVLRERKLREGEAFELDESLLASQLLAFCEGMLSRFVRTEFKYRPTQEFELRWPLLVAQLH.

Residues 9 to 70 enclose the HTH tetR-type domain; it reads RNRREEILQA…SLIEFIEDSL (62 aa). Residues 33-52 constitute a DNA-binding region (H-T-H motif); that stretch reads TTAKLAANVGVSEAALYRHF. Residues 119–144 adopt a coiled-coil conformation; the sequence is DRLQGRINQLYERIEVQLRQVLRERK.

Belongs to the nucleoid occlusion factor SlmA family. In terms of assembly, homodimer. Interacts with FtsZ.

It is found in the cytoplasm. The protein resides in the nucleoid. In terms of biological role, required for nucleoid occlusion (NO) phenomenon, which prevents Z-ring formation and cell division over the nucleoid. Acts as a DNA-associated cell division inhibitor that binds simultaneously chromosomal DNA and FtsZ, and disrupts the assembly of FtsZ polymers. SlmA-DNA-binding sequences (SBS) are dispersed on non-Ter regions of the chromosome, preventing FtsZ polymerization at these regions. The chain is Nucleoid occlusion factor SlmA from Sodalis glossinidius (strain morsitans).